A 487-amino-acid polypeptide reads, in one-letter code: 2-aminomuconic semialdehyde dehydrogenase (487 aa).

231-236 (GSQPTA) serves as a coordination point for NAD(+). Residue E253 is the Proton acceptor of the active site. The active-site Nucleophile is the C287. S362 is modified (phosphoserine).

The protein belongs to the aldehyde dehydrogenase family. As to expression, detected in hepatocytes and in proximal and distal convoluted tubules in kidney cortex (at protein level). Highly expressed in adult liver and in kidney cortex. First detected in embryonic liver after 15 days of development.

Its subcellular location is the cytoplasm. The enzyme catalyses 2-aminomuconate 6-semialdehyde + NAD(+) + H2O = (2Z,4E)-2-aminomuconate + NADH + 2 H(+). It functions in the pathway amino-acid degradation; L-kynurenine degradation. Its function is as follows. Catalyzes the NAD-dependent oxidation of 2-aminomuconic semialdehyde of the kynurenine metabolic pathway in L-tryptophan degradation. This chain is 2-aminomuconic semialdehyde dehydrogenase (Aldh8a1), found in Mus musculus (Mouse).